The following is a 387-amino-acid chain: G-protein coupled receptor homolog R33 (387 aa).

Residues 1–33 (MDVLLGTEELEDELHQLHFNYTCVPSLGLSVAR) lie on the Extracellular side of the membrane. Asparagine 20 carries an N-linked (GlcNAc...) asparagine; by host glycan. Residues 34 to 61 (DAETAVNFLIVLVGGPMNFLVLATQMLS) form a helical membrane-spanning segment. Residues 62–71 (NRSYSVSTPT) are Cytoplasmic-facing. The chain crosses the membrane as a helical span at residues 72–94 (LYMTNLYLANLLTVATLPFLMLS). At 95 to 107 (NRGLVGSSPEGCK) the chain is on the extracellular side. The chain crosses the membrane as a helical span at residues 108 to 129 (IAALAYYATCTAGFATLMLIAI). Topologically, residues 130-150 (NRYRVIHQRTRSGAGSKRQTY) are cytoplasmic. Residues 151-169 (AVLAVTWLASLMCASPAPL) traverse the membrane as a helical segment. Residues 170 to 204 (YATVMAHDSADALAFETCIIYFSYDQVKTVLATFK) are Extracellular-facing. The helical transmembrane segment at 205–224 (ILITMIWGITPVVMMSWFYV) threads the bilayer. Residues 225–244 (FFYRRLKLTSYRRRSQTLTF) are Cytoplasmic-facing. Residues 245-268 (VTTLMLSFLVVQTPFVAIMSYDSY) traverse the membrane as a helical segment. At 269-285 (GVLNWPINCDTINKRDA) the chain is on the extracellular side. The chain crosses the membrane as a helical span at residues 286 to 309 (VSMLARVVPNFHCLLNPVLYAFLG). At 310 to 387 (RDFNKRFILC…PPPPPPPPNC (78 aa)) the chain is on the cytoplasmic side. The tract at residues 368-387 (RLRALGRPPPPPPPPPPPNC) is disordered. Pro residues predominate over residues 374–387 (RPPPPPPPPPPPNC).

It belongs to the G-protein coupled receptor 1 family.

It is found in the host cell membrane. In terms of biological role, plays an important role in vivo, in particular in the dissemination to or replication in the salivary gland. The chain is G-protein coupled receptor homolog R33 from Rattus.